Reading from the N-terminus, the 128-residue chain is UPF0292 protein MJ1624 (128 aa).

In terms of domain architecture, Toprim spans 23–105; it reads EKPIIVEGKR…KVNTKIRHEI (83 aa). Mg(2+) is bound by residues glutamate 29, aspartate 74, and aspartate 76.

The protein belongs to the UPF0292 family. It depends on Mg(2+) as a cofactor.

The polypeptide is UPF0292 protein MJ1624 (Methanocaldococcus jannaschii (strain ATCC 43067 / DSM 2661 / JAL-1 / JCM 10045 / NBRC 100440) (Methanococcus jannaschii)).